Here is a 3625-residue protein sequence, read N- to C-terminus: Cubilin (3625 aa).

The signal sequence occupies residues 1-20 (MVNNMSLLFLWSLVIFLTFA). Residues 21–36 (ESYGEAGGPELQRHKR) constitute a propeptide, removed in mature form. Positions 43 to 50 (PRMAAERG) are interaction with AMN. The N-linked (GlcNAc...) asparagine glycan is linked to N106. Positions 133–169 (DGKVCSSNPCQNGATCLNLHDSFFCICPSQWKGPLCS) constitute an EGF-like 1 domain. 6 disulfide bridges follow: C137–C148, C142–C157, C159–C168, C175–C191, C185–C200, and C202–C211. The region spanning 171–212 (DVNECEIYSGTPLGCQNGATCINTPGSYSCLCSPETHGPQCA) is the EGF-like 2; calcium-binding domain. N-linked (GlcNAc...) asparagine glycosylation is present at N257. The 42-residue stretch at 264–305 (DRDECSSWPAPCSALVPCFNTLGSFYCGACPTGWQGNGYICE) folds into the EGF-like 3; calcium-binding domain. Cystine bridges form between C268/C281, C275/C290, C293/C304, C310/C325, C317/C334, C337/C348, C354/C367, C361/C377, C379/C393, C400/C410, C405/C419, C421/C430, C437/C448, C442/C457, C459/C468, C475/C501, C528/C550, C591/C617, C644/C666, and C709/C734. One can recognise an EGF-like 4; calcium-binding domain in the interval 306–349 (DINECEINNGGCSVAPPVECVNTPGSYYCPSCPPGYQGDGRMCT). EGF-like domains are found at residues 350-394 (LIDL…HGCV) and 396-431 (LSNVCLTRPCLHGQCMETASGYVCNCDSGWAGMNCT). An N-linked (GlcNAc...) asparagine glycan is attached at N429. One can recognise an EGF-like 7; calcium-binding domain in the interval 433 to 469 (NINECLSNPCLNGGTCVDGINAFSCECTRFWTGSLCH). CUB domains lie at 475–587 (CGGT…WETR), 591–703 (CGGV…YLTT), 709–816 (CGGN…YQVA), 817–928 (CGGE…FSTE), 932–1042 (CGEI…YEAT), 1045–1163 (SAGN…WDGS), 1167–1279 (CGGN…YQQT), 1280–1391 (CDNV…WLVH), 1393–1508 (CGGE…WRAV), 1512–1621 (CGGI…FRQA), 1622–1736 (CGGH…YVAS), 1740–1852 (CGGI…FNNI), 1854–1965 (GNDH…WFAM), 1980–2093 (CGGF…FHKS), 2094–2215 (CGGY…YEAK), 2219–2336 (CGGN…YSIA), 2338–2450 (CGGT…FDSS), 2454–2567 (CGGD…YTSS), 2572–2689 (CGGS…YSFT), 2691–2803 (CGGI…WNTE), 2807–2921 (CGGI…FLSR), 2922–3037 (CGRN…YRIT), 3039–3152 (CGGT…FRET), 3159–3276 (CGGY…YTLL), 3280–3397 (CGGT…IAGC), 3397–3509 (CSRE…WTSS), and 3513–3625 (CGGT…TWAS). 2 N-linked (GlcNAc...) asparagine glycosylation sites follow: N712 and N749. C761 and C779 are joined by a disulfide. N781 is a glycosylation site (N-linked (GlcNAc...) asparagine). A disulfide bridge connects residues C817 and C842. An N-linked (GlcNAc...) asparagine glycan is attached at N857. Disulfide bonds link C869–C891 and C932–C958. A glycan (N-linked (GlcNAc...) asparagine) is linked at N957. Position 980 (E980) interacts with Ca(2+). The N-linked (GlcNAc...) asparagine glycan is linked to N984. C985 and C1005 are disulfide-bonded. Ca(2+)-binding residues include D988, D1027, D1029, and L1030. N1048 carries an N-linked (GlcNAc...) asparagine glycan. Residues E1097, D1107, and D1148 each contribute to the Ca(2+) site. C1104 and C1126 form a disulfide bridge. C1167 and C1193 are disulfide-bonded. A glycan (N-linked (GlcNAc...) asparagine) is linked at N1170. Residue E1215 coordinates Ca(2+). An N-linked (GlcNAc...) asparagine glycan is attached at N1219. Cysteines 1220 and 1242 form a disulfide. Ca(2+) is bound by residues D1223, D1264, G1266, and Q1267. C1280 and C1308 form a disulfide bridge. N-linked (GlcNAc...) asparagine glycosylation is found at N1287, N1309, and N1321. Residue E1330 participates in Ca(2+) binding. N-linked (GlcNAc...) asparagine glycosylation is present at N1334. Cysteines 1335 and 1353 form a disulfide. The Ca(2+) site is built by D1338, D1375, and V1377. 2 disulfide bridges follow: C1393-C1419 and C1446-C1468. A glycan (N-linked (GlcNAc...) asparagine) is linked at N1502. A disulfide bridge links C1512 with C1538. N1553 is a glycosylation site (N-linked (GlcNAc...) asparagine). Disulfide bonds link C1565-C1583, C1622-C1649, C1677-C1699, C1740-C1766, and C1793-C1814. Residue N1648 is glycosylated (N-linked (GlcNAc...) asparagine). 3 N-linked (GlcNAc...) asparagine glycosylation sites follow: N1804, N1821, and N1887. 3 cysteine pairs are disulfide-bonded: C1907-C1929, C1980-C2008, and C2034-C2056. N-linked (GlcNAc...) asparagine glycans are attached at residues N2087 and N2119. 2 cysteine pairs are disulfide-bonded: C2094-C2120 and C2219-C2249. The N-linked (GlcNAc...) asparagine glycan is linked to N2276. Disulfide bonds link C2277/C2299 and C2338/C2365. N-linked (GlcNAc...) asparagine glycosylation is found at N2388 and N2402. Cystine bridges form between C2392–C2413, C2454–C2480, and C2507–C2529. N-linked (GlcNAc...) asparagine glycans are attached at residues N2533, N2583, N2594, and N2612. An intrachain disulfide couples C2572 to C2601. Intrachain disulfides connect C2630-C2651, C2691-C2717, C2744-C2766, C2807-C2833, and C2862-C2885. N-linked (GlcNAc...) asparagine glycans are attached at residues N2887, N2925, N2928, and N2947. 2 cysteine pairs are disulfide-bonded: C2922/C2948 and C2979/C3001. T3010 carries the phosphothreonine modification. 2 cysteine pairs are disulfide-bonded: C3039-C3066 and C3093-C3115. N-linked (GlcNAc...) asparagine glycosylation is found at N3044, N3105, and N3127. 2 cysteine pairs are disulfide-bonded: C3159/C3187 and C3217/C3239. N3270 and N3285 each carry an N-linked (GlcNAc...) asparagine glycan. 2 disulfide bridges follow: C3280–C3308 and C3334–C3356. N-linked (GlcNAc...) asparagine glycosylation occurs at N3359. The cysteines at positions 3397 and 3423 are disulfide-linked. 3 N-linked (GlcNAc...) asparagine glycosylation sites follow: N3432, N3459, and N3535. Intrachain disulfides connect C3450/C3472, C3513/C3539, and C3566/C3588.

In terms of assembly, interacts with AMN. Component of the cubam complex composed of one CUBN trimer and one AMN chain. The cubam complex can dimerize. Interacts with LRP2 in a dual-receptor complex in a calcium-dependent manner. Found in a complex with PID1/PCLI1, LRP1 and CUBNI. Interacts with LRP1 and PID1/PCLI1. In terms of processing, the precursor is cleaved by a trans-Golgi proteinase furin, removing a propeptide. Post-translationally, N-glycosylated. In terms of tissue distribution, detected in kidney cortex (at protein level).

It is found in the apical cell membrane. It localises to the cell membrane. The protein resides in the membrane. Its subcellular location is the coated pit. The protein localises to the endosome. It is found in the lysosome membrane. Endocytic receptor which plays a role in lipoprotein, vitamin and iron metabolism by facilitating their uptake. Acts together with LRP2 to mediate endocytosis of high-density lipoproteins, GC, hemoglobin, ALB, TF and SCGB1A1. Acts together with AMN to mediate endocytosis of the CBLIF-cobalamin complex. Binds to ALB, MB, Kappa and lambda-light chains, TF, hemoglobin, GC, SCGB1A1, APOA1, high density lipoprotein, and the CBLIF-cobalamin complex. Ligand binding requires calcium. Serves as important transporter in several absorptive epithelia, including intestine, renal proximal tubules and embryonic yolk sac. May play an important role in the development of the peri-implantation embryo through internalization of APOA1 and cholesterol. Binds to LGALS3 at the maternal-fetal interface. The protein is Cubilin (CUBN) of Sus scrofa (Pig).